We begin with the raw amino-acid sequence, 148 residues long: Small ribosomal subunit protein uS13 (148 aa).

This sequence belongs to the universal ribosomal protein uS13 family. As to quaternary structure, part of the 30S ribosomal subunit. Forms a loose heterodimer with protein S19. Forms two bridges to the 50S subunit in the 70S ribosome.

In terms of biological role, located at the top of the head of the 30S subunit, it contacts several helices of the 16S rRNA. In the 70S ribosome it contacts the 23S rRNA (bridge B1a) and protein L5 of the 50S subunit (bridge B1b), connecting the 2 subunits; these bridges are implicated in subunit movement. The chain is Small ribosomal subunit protein uS13 from Pyrococcus abyssi (strain GE5 / Orsay).